Here is a 187-residue protein sequence, read N- to C-terminus: Accessory gene regulator protein B (187 aa).

The next 5 membrane-spanning stretches (helical) occupy residues 49–69, 82–102, 106–126, 144–164, and 166–186; these read ISIFLSVFLFTLVTHLSYMLI, ILCYIQSILTFVFVPYFLINI, FTYLLALSIIGLISVVIYAPA, LSIIMYLLVLILSLIIHPFYA, and FMLLGILVESITLLPIFFPKE.

It belongs to the AgrB family.

Its subcellular location is the cell membrane. In terms of biological role, essential for the production of a quorum sensing system signal molecule, the autoinducing peptide (AIP). This quorum sensing system is responsible for the regulation of the expression of virulence factor genes. Involved in the proteolytic processing of AgrD, the precursor of AIP. This Staphylococcus aureus (strain Mu50 / ATCC 700699) protein is Accessory gene regulator protein B.